The following is a 383-amino-acid chain: Putative glutamate--cysteine ligase 2-1 (383 aa).

It belongs to the glutamate--cysteine ligase type 2 family. YbdK subfamily.

It carries out the reaction L-cysteine + L-glutamate + ATP = gamma-L-glutamyl-L-cysteine + ADP + phosphate + H(+). Its function is as follows. ATP-dependent carboxylate-amine ligase which exhibits weak glutamate--cysteine ligase activity. This Legionella pneumophila (strain Corby) protein is Putative glutamate--cysteine ligase 2-1.